Here is a 1360-residue protein sequence, read N- to C-terminus: DNA-directed RNA polymerase subunit beta (1360 aa).

Belongs to the RNA polymerase beta chain family. The RNAP catalytic core consists of 2 alpha, 1 beta, 1 beta' and 1 omega subunit. When a sigma factor is associated with the core the holoenzyme is formed, which can initiate transcription.

It catalyses the reaction RNA(n) + a ribonucleoside 5'-triphosphate = RNA(n+1) + diphosphate. DNA-dependent RNA polymerase catalyzes the transcription of DNA into RNA using the four ribonucleoside triphosphates as substrates. This Magnetococcus marinus (strain ATCC BAA-1437 / JCM 17883 / MC-1) protein is DNA-directed RNA polymerase subunit beta.